The chain runs to 488 residues: Inosine-5'-monophosphate dehydrogenase (488 aa).

2 consecutive CBS domains span residues 93–149 and 153–214; these read VVTD…NQPV and MTPK…CKDE. NAD(+)-binding positions include aspartate 248 and 248-250; that span reads DSS. Lysine 267 carries the post-translational modification N6-acetyllysine. 298 to 300 provides a ligand contact to NAD(+); the sequence is GIG. Positions 300 and 302 each coordinate K(+). Serine 303 contacts IMP. Residue cysteine 305 participates in K(+) binding. Cysteine 305 serves as the catalytic Thioimidate intermediate. IMP contacts are provided by residues 338 to 340, 361 to 362, and 385 to 389; these read DGG, GS, and YRGMG. Catalysis depends on arginine 401, which acts as the Proton acceptor. IMP is bound at residue glutamate 415. The residue at position 428 (lysine 428) is an N6-acetyllysine. 3 residues coordinate K(+): glutamate 469, serine 470, and histidine 471.

This sequence belongs to the IMPDH/GMPR family. In terms of assembly, homotetramer. K(+) is required as a cofactor.

It carries out the reaction IMP + NAD(+) + H2O = XMP + NADH + H(+). The protein operates within purine metabolism; XMP biosynthesis via de novo pathway; XMP from IMP: step 1/1. With respect to regulation, mycophenolic acid (MPA) is a non-competitive inhibitor that prevents formation of the closed enzyme conformation by binding to the same site as the amobile flap. In contrast, mizoribine monophosphate (MZP) is a competitive inhibitor that induces the closed conformation. MPA is a potent inhibitor of mammalian IMPDHs but a poor inhibitor of the bacterial enzymes. MZP is a more potent inhibitor of bacterial IMPDH. In terms of biological role, catalyzes the conversion of inosine 5'-phosphate (IMP) to xanthosine 5'-phosphate (XMP), the first committed and rate-limiting step in the de novo synthesis of guanine nucleotides, and therefore plays an important role in the regulation of cell growth. In Escherichia coli O157:H7, this protein is Inosine-5'-monophosphate dehydrogenase.